The chain runs to 409 residues: 3-isopropylmalate dehydrogenase 1, chloroplastic (409 aa).

Residues 1-37 (MAAFLQTNISLNAIKIVPGKYSSLTDHQFRAPYRIRC) constitute a chloroplast transit peptide. The residue at position 74 (S74) is a Phosphoserine. Position 118-133 (118-133 (IGGYKWDKNEKHLRPE)) interacts with NAD(+). Substrate-binding residues include R140, R150, and R178. NAD(+) is bound at residue N238. D268 is a binding site for substrate. Residue D268 participates in Mg(2+) binding. N269 contributes to the NAD(+) binding site. Positions 292 and 296 each coordinate Mg(2+). NAD(+) is bound at residue 322–338 (EPIHGSAPDIAGQDKAN).

The protein belongs to the isocitrate and isopropylmalate dehydrogenases family. Homodimer. Mg(2+) serves as cofactor. Mn(2+) is required as a cofactor. As to expression, highly expressed in seedlings, leaves, stems and roots and, to a lower extent, in flowers, pollen and siliques.

The protein localises to the plastid. It localises to the chloroplast stroma. The enzyme catalyses (2R,3S)-3-isopropylmalate + NAD(+) = 4-methyl-2-oxopentanoate + CO2 + NADH. It participates in amino-acid biosynthesis; L-leucine biosynthesis; L-leucine from 3-methyl-2-oxobutanoate: step 3/4. It functions in the pathway secondary metabolite biosynthesis. With respect to regulation, regulated by a thiol-based redox modification; oxidation by CuCl(2) leads to a decreased activity. Functionally, involved in both glucosinolate and leucine biosynthesis; catalyzes the oxidative decarboxylation step in both leucine biosynthesis (primary metabolism) and methionine chain elongation of glucosinolates (specialized metabolism). Catalyzes the oxidation of 3-carboxy-2-hydroxy-4-methylpentanoate (3-isopropylmalate, 3-IPM) to 3-carboxy-4-methyl-2-oxopentanoate. The product decarboxylates to 4-methyl-2 oxopentanoate. Required during pollen development and involved in embryo sac development. More active on 3-isopropylmalate and NAD(+) than towards D-malate. In Arabidopsis thaliana (Mouse-ear cress), this protein is 3-isopropylmalate dehydrogenase 1, chloroplastic.